The following is a 561-amino-acid chain: Glutamate--tRNA ligase (561 aa).

The short motif at 107-117 (PNPSGPLHLGH) is the 'HIGH' region element.

It belongs to the class-I aminoacyl-tRNA synthetase family. Glutamate--tRNA ligase type 2 subfamily.

The protein localises to the cytoplasm. The enzyme catalyses tRNA(Glu) + L-glutamate + ATP = L-glutamyl-tRNA(Glu) + AMP + diphosphate. Functionally, catalyzes the attachment of glutamate to tRNA(Glu) in a two-step reaction: glutamate is first activated by ATP to form Glu-AMP and then transferred to the acceptor end of tRNA(Glu). This chain is Glutamate--tRNA ligase, found in Methanospirillum hungatei JF-1 (strain ATCC 27890 / DSM 864 / NBRC 100397 / JF-1).